The following is a 190-amino-acid chain: Small ribosomal subunit protein eS7 (190 aa).

Belongs to the eukaryotic ribosomal protein eS7 family. In terms of assembly, component of the small ribosomal subunit. Part of the small subunit (SSU) processome, composed of more than 70 proteins and the RNA chaperone small nucleolar RNA (snoRNA) U3.

The protein resides in the cytoplasm. It localises to the cytoskeleton. It is found in the microtubule organizing center. Its subcellular location is the centrosome. The protein localises to the nucleus. The protein resides in the nucleolus. Its function is as follows. Component of the small ribosomal subunit. The ribosome is a large ribonucleoprotein complex responsible for the synthesis of proteins in the cell. Required for rRNA maturation. Part of the small subunit (SSU) processome, first precursor of the small eukaryotic ribosomal subunit. During the assembly of the SSU processome in the nucleolus, many ribosome biogenesis factors, an RNA chaperone and ribosomal proteins associate with the nascent pre-rRNA and work in concert to generate RNA folding, modifications, rearrangements and cleavage as well as targeted degradation of pre-ribosomal RNA by the RNA exosome. The chain is Small ribosomal subunit protein eS7 (RpS7) from Spodoptera frugiperda (Fall armyworm).